The following is a 375-amino-acid chain: Queuine tRNA-ribosyltransferase (375 aa).

Residue Asp-90 is the Proton acceptor of the active site. Substrate is bound by residues 90–94 (DSGGF), Asp-144, Gln-190, and Gly-217. Positions 248–254 (GIGTPHY) are RNA binding. Asp-267 serves as the catalytic Nucleophile. The RNA binding; important for wobble base 34 recognition stretch occupies residues 272–276 (ARITR). Zn(2+) is bound by residues Cys-305, Cys-307, Cys-310, and His-336.

It belongs to the queuine tRNA-ribosyltransferase family. Homodimer. Within each dimer, one monomer is responsible for RNA recognition and catalysis, while the other monomer binds to the replacement base PreQ1. Requires Zn(2+) as cofactor.

It carries out the reaction 7-aminomethyl-7-carbaguanine + guanosine(34) in tRNA = 7-aminomethyl-7-carbaguanosine(34) in tRNA + guanine. The protein operates within tRNA modification; tRNA-queuosine biosynthesis. Functionally, catalyzes the base-exchange of a guanine (G) residue with the queuine precursor 7-aminomethyl-7-deazaguanine (PreQ1) at position 34 (anticodon wobble position) in tRNAs with GU(N) anticodons (tRNA-Asp, -Asn, -His and -Tyr). Catalysis occurs through a double-displacement mechanism. The nucleophile active site attacks the C1' of nucleotide 34 to detach the guanine base from the RNA, forming a covalent enzyme-RNA intermediate. The proton acceptor active site deprotonates the incoming PreQ1, allowing a nucleophilic attack on the C1' of the ribose to form the product. After dissociation, two additional enzymatic reactions on the tRNA convert PreQ1 to queuine (Q), resulting in the hypermodified nucleoside queuosine (7-(((4,5-cis-dihydroxy-2-cyclopenten-1-yl)amino)methyl)-7-deazaguanosine). The sequence is that of Queuine tRNA-ribosyltransferase from Borreliella burgdorferi (strain ZS7) (Borrelia burgdorferi).